A 107-amino-acid polypeptide reads, in one-letter code: Ribonuclease P protein component 4 (107 aa).

Zn(2+) contacts are provided by cysteine 62, cysteine 65, cysteine 87, and cysteine 90.

The protein belongs to the eukaryotic/archaeal RNase P protein component 4 family. In terms of assembly, consists of a catalytic RNA component and at least 4-5 protein subunits. It depends on Zn(2+) as a cofactor.

It is found in the cytoplasm. It carries out the reaction Endonucleolytic cleavage of RNA, removing 5'-extranucleotides from tRNA precursor.. Functionally, part of ribonuclease P, a protein complex that generates mature tRNA molecules by cleaving their 5'-ends. This chain is Ribonuclease P protein component 4, found in Archaeoglobus fulgidus (strain ATCC 49558 / DSM 4304 / JCM 9628 / NBRC 100126 / VC-16).